The chain runs to 425 residues: Adenylosuccinate synthetase (425 aa).

GTP is bound by residues 12–18 and 40–42; these read GDEGKGK and GHT. D13 serves as the catalytic Proton acceptor. Mg(2+) is bound by residues D13 and G40. IMP is bound by residues 13–16, 38–41, T129, R143, N221, T236, and R300; these read DEGK and NAGH. Catalysis depends on H41, which acts as the Proton donor. Residue 296-302 coordinates substrate; sequence VTTGRKR. Residues R302, 328–330, and 410–412 contribute to the GTP site; these read KLD and GVG.

This sequence belongs to the adenylosuccinate synthetase family. In terms of assembly, homodimer. It depends on Mg(2+) as a cofactor.

The protein localises to the cytoplasm. It catalyses the reaction IMP + L-aspartate + GTP = N(6)-(1,2-dicarboxyethyl)-AMP + GDP + phosphate + 2 H(+). The protein operates within purine metabolism; AMP biosynthesis via de novo pathway; AMP from IMP: step 1/2. In terms of biological role, plays an important role in the de novo pathway and in the salvage pathway of purine nucleotide biosynthesis. Catalyzes the first committed step in the biosynthesis of AMP from IMP. The protein is Adenylosuccinate synthetase of Phaeosphaeria nodorum (strain SN15 / ATCC MYA-4574 / FGSC 10173) (Glume blotch fungus).